Reading from the N-terminus, the 216-residue chain is Ras-like protein (216 aa).

16–23 (GGGGVGKS) is a binding site for GTP. The Effector region motif lies at 38–46 (YDPTIEDSY). GTP contacts are provided by residues 63–67 (DTAGQ) and 122–125 (NKCD). 2 S-palmitoyl cysteine lipidation sites follow: Cys-209 and Cys-210. Cysteine methyl ester is present on Cys-213. Cys-213 carries S-geranylgeranyl cysteine lipidation. The propeptide at 214 to 216 (VVL) is removed in mature form.

Belongs to the small GTPase superfamily. Ras family.

It localises to the cell membrane. It catalyses the reaction GTP + H2O = GDP + phosphate + H(+). Its activity is regulated as follows. Alternates between an inactive form bound to GDP and an active form bound to GTP. Activated by a guanine nucleotide-exchange factor (GEF) and inactivated by a GTPase-activating protein (GAP). In Cryptococcus neoformans var. neoformans serotype D (strain B-3501A) (Filobasidiella neoformans), this protein is Ras-like protein (RAS1).